Reading from the N-terminus, the 146-residue chain is Large ribosomal subunit protein uL15x (146 aa).

2 stretches are compositionally biased toward basic residues: residues 1 to 14 (MTTR…KRGH) and 21 to 30 (RIGKHRKHPG). Positions 1-35 (MTTRFKKNRKKRGHVSAGHGRIGKHRKHPGGRGNA) are disordered.

Belongs to the universal ribosomal protein uL15 family.

This chain is Large ribosomal subunit protein uL15x (RPL27AC), found in Arabidopsis thaliana (Mouse-ear cress).